Consider the following 1308-residue polypeptide: Receptor tyrosine-protein kinase erbB-4 (1308 aa).

The N-terminal stretch at 1–25 (MKLATGLWVWGSLLMAAGTVQPSAS) is a signal peptide. Residues 26 to 652 (QSVCAGTENK…TLPQHARTPL (627 aa)) lie on the Extracellular side of the membrane. A disulfide bridge links C29 with C56. 3 N-linked (GlcNAc...) asparagine glycosylation sites follow: N138, N174, and N181. Intrachain disulfides connect C156/C186, C189/C197, C193/C205, C213/C221, C217/C229, C230/C238, C234/C246, C249/C258, C262/C289, C293/C304, C308/C323, and C326/C330. An N-linked (GlcNAc...) asparagine glycan is attached at N253. 3 N-linked (GlcNAc...) asparagine glycosylation sites follow: N410, N473, and N495. Disulfide bonds link C503/C512, C507/C520, C523/C532, C536/C552, C555/C569, C559/C577, C580/C589, C593/C614, C617/C625, and C621/C633. Residue N548 is glycosylated (N-linked (GlcNAc...) asparagine). Residue N576 is glycosylated (N-linked (GlcNAc...) asparagine). An N-linked (GlcNAc...) asparagine glycan is attached at N620. The chain crosses the lipid bilayer at residues 653–673 (IAAGVIGGLFILVIMALTFAV). At 674–1308 (YVRRKSIKKK…PPYRHRNTVV (635 aa)) the chain is on the cytoplasmic side. Positions 676 to 684 (RRKSIKKKR) match the Nuclear localization signal motif. Residues 718–985 (LKRVKVLGSG…RMARDPQRYL (268 aa)) form the Protein kinase domain. ATP is bound by residues 724-732 (LGSGAFGTV), K751, 797-799 (QLM), and 843-848 (DLAARN). The Proton acceptor role is filled by D843. Residues Y875, Y1035, and Y1056 each carry the phosphotyrosine; by autocatalysis modification. The PPxy motif 1 motif lies at 1032–1035 (PPIY). A disordered region spans residues 1117 to 1149 (PHVQEDSSTQRYSADPTVFAPERNPRGELDEEG). Residues Y1150, Y1162, Y1188, Y1202, Y1242, Y1258, and Y1284 each carry the phosphotyrosine; by autocatalysis modification. A PPxY motif 2 motif is present at residues 1282–1285 (PEYL). The short motif at 1290-1292 (LKP) is the PDZ-binding element.

This sequence belongs to the protein kinase superfamily. Tyr protein kinase family. EGF receptor subfamily. As to quaternary structure, monomer in the absence of bound ligand. Homodimer or heterodimer with another ERBB family member upon ligand binding, thus forming heterotetramers. Interacts with EGFR and ERBB2. Interacts with DLG2 (via its PDZ domain), DLG3 (via its PDZ domain), DLG4 (via its PDZ domain) and SNTB2 (via its PDZ domain). Interacts with MUC1. Interacts (via its PPxy motifs) with WWOX. Interacts (via the PPxY motif 3 of isoform JM-A CYT-2) with YAP1 (via the WW domain 1 of isoform 1). Interacts (isoform JM-A CYT-1 and isoform JM-B CYT-1) with WWP1. Interacts (via its intracellular domain) with TRIM28. Interacts (via the intracellular domains of both CYT-1 and CYT-2 isoforms) with KAP1; the interaction does not phosphorylate KAP1 but represses ERBB4-mediated transcriptional activity. Interacts with PRPU, DDX23, MATR3, RBM15, ILF3, KAP1, U5S1, U2SURP, ITCH, HNRNPU, AP2A1, NULC, LEO1, WWP2, IGHG1, HXK1, GRB7 and SRRT. Interacts (phosphorylated isoform JM-A CYT-1 and isoform JM-B CYT-1) with PIK3R1. Interacts with SHC1. Interacts with GRB2. Interacts (soluble intracellular domain) with BCL2. Interacts (phosphorylated) with STAT1. Interacts with CBFA2T3. Interacts (soluble intracellular domain) with STAT5A. In terms of processing, isoform JM-A CYT-1 and isoform JM-A CYT-2 are processed by ADAM17. Proteolytic processing in response to ligand or 12-O-tetradecanoylphorbol-13-acetate stimulation results in the production of 120 kDa soluble receptor forms and intermediate membrane-anchored 80 kDa fragments (m80HER4), which are further processed by a presenilin-dependent gamma-secretase to release a cytoplasmic intracellular domain (E4ICD; E4ICD1/s80Cyt1 or E4ICD2/s80Cyt2, depending on the isoform). Membrane-anchored 80 kDa fragments of the processed isoform JM-A CYT-1 are more readily degraded by the proteasome than fragments of isoform JM-A CYT-2, suggesting a prevalence of E4ICD2 over E4ICD1. Isoform JM-B CYT-1 and isoform JM-B CYT-2 lack the ADAM17 cleavage site and are not processed by ADAM17, precluding further processing by gamma-secretase. Post-translationally, autophosphorylated on tyrosine residues in response to ligand binding. Autophosphorylation occurs in trans, i.e. one subunit of the dimeric receptor phosphorylates tyrosine residues on the other subunit. Ligands trigger phosphorylation at specific tyrosine residues, thereby creating binding sites for scaffold proteins and effectors. Constitutively phosphorylated at a basal level when overexpressed in heterologous systems; ligand binding leads to increased phosphorylation. Phosphorylation at Tyr-1035 is important for interaction with STAT1. Phosphorylation at Tyr-1056 is important for interaction with PIK3R1. Phosphorylation at Tyr-1242 is important for interaction with SHC1. Phosphorylation at Tyr-1188 may also contribute to the interaction with SHC1. Isoform JM-A CYT-2 is constitutively phosphorylated on tyrosine residues in a ligand-independent manner. E4ICD2 but not E4ICD1 is phosphorylated on tyrosine residues. Ubiquitinated. During mitosis, the ERBB4 intracellular domain is ubiquitinated by the APC/C complex and targeted to proteasomal degradation. Isoform JM-A CYT-1 and isoform JM-B CYT-1 are ubiquitinated by WWP1. The ERBB4 intracellular domain (E4ICD1) is ubiquitinated, and this involves NEDD4. As to expression, isoform JM-A CYT-2 and isoform JM-B CYT-2 are expressed in cerebellum, cerebral cortex, spinal cord, medulla oblongata and eye, but the kidney expresses solely isoform JM-A CYT-2 and the heart solely isoform JM-B CYT-2.

The protein resides in the cell membrane. It is found in the nucleus. It localises to the mitochondrion. It catalyses the reaction L-tyrosyl-[protein] + ATP = O-phospho-L-tyrosyl-[protein] + ADP + H(+). Binding of a cognate ligand leads to dimerization and activation by autophosphorylation on tyrosine residues. In vitro kinase activity is increased by Mg(2+). Its function is as follows. Tyrosine-protein kinase that plays an essential role as cell surface receptor for neuregulins and EGF family members and regulates development of the heart, the central nervous system and the mammary gland, gene transcription, cell proliferation, differentiation, migration and apoptosis. Required for normal cardiac muscle differentiation during embryonic development, and for postnatal cardiomyocyte proliferation. Required for normal development of the embryonic central nervous system, especially for normal neural crest cell migration and normal axon guidance. Required for mammary gland differentiation, induction of milk proteins and lactation. Acts as cell-surface receptor for the neuregulins NRG1, NRG2, NRG3 and NRG4 and the EGF family members BTC, EREG and HBEGF. Ligand binding triggers receptor dimerization and autophosphorylation at specific tyrosine residues that then serve as binding sites for scaffold proteins and effectors. Ligand specificity and signaling is modulated by alternative splicing, proteolytic processing, and by the formation of heterodimers with other ERBB family members, thereby creating multiple combinations of intracellular phosphotyrosines that trigger ligand- and context-specific cellular responses. Mediates phosphorylation of SHC1 and activation of the MAP kinases MAPK1/ERK2 and MAPK3/ERK1. Isoform JM-A CYT-1 and isoform JM-B CYT-1 phosphorylate PIK3R1, leading to the activation of phosphatidylinositol 3-kinase and AKT1 and protect cells against apoptosis. Isoform JM-A CYT-1 and isoform JM-B CYT-1 mediate reorganization of the actin cytoskeleton and promote cell migration in response to NRG1. Isoform JM-A CYT-2 and isoform JM-B CYT-2 lack the phosphotyrosine that mediates interaction with PIK3R1, and hence do not phosphorylate PIK3R1, do not protect cells against apoptosis, and do not promote reorganization of the actin cytoskeleton and cell migration. Proteolytic processing of isoform JM-A CYT-1 and isoform JM-A CYT-2 gives rise to the corresponding soluble intracellular domains (4ICD) that translocate to the nucleus, promote nuclear import of STAT5A, activation of STAT5A, mammary epithelium differentiation, cell proliferation and activation of gene expression. The ERBB4 soluble intracellular domains (4ICD) colocalize with STAT5A at the CSN2 promoter to regulate transcription of milk proteins during lactation. The ERBB4 soluble intracellular domains can also translocate to mitochondria and promote apoptosis. This is Receptor tyrosine-protein kinase erbB-4 (Erbb4) from Mus musculus (Mouse).